The chain runs to 697 residues: Elongation factor G (697 aa).

One can recognise a tr-type G domain in the interval 6–281 (ENIRNIGICA…AVVDYLPSPI (276 aa)). GTP-binding positions include 15–22 (AHIDAGKT), 79–83 (DTPGH), and 133–136 (NKMD).

The protein belongs to the TRAFAC class translation factor GTPase superfamily. Classic translation factor GTPase family. EF-G/EF-2 subfamily.

The protein localises to the cytoplasm. Catalyzes the GTP-dependent ribosomal translocation step during translation elongation. During this step, the ribosome changes from the pre-translocational (PRE) to the post-translocational (POST) state as the newly formed A-site-bound peptidyl-tRNA and P-site-bound deacylated tRNA move to the P and E sites, respectively. Catalyzes the coordinated movement of the two tRNA molecules, the mRNA and conformational changes in the ribosome. The sequence is that of Elongation factor G from Rickettsia bellii (strain OSU 85-389).